A 147-amino-acid polypeptide reads, in one-letter code: MRCPYCGNVETTVVETRESDEGDAVRRRRRCSACDKRFTTYERAELAMPAVVKKNGDRREFDREKLRASMTLALRKRNVSVDLIDAAIARIEDKVFTSGASEMSTSRIGEMVMRELKRLDKVAYVRFASVYREFEDIDAFSKLIQEI.

The segment at 3–34 (CPYCGNVETTVVETRESDEGDAVRRRRRCSAC) is a zinc-finger region. Residues 49-139 (PAVVKKNGDR…VYREFEDIDA (91 aa)) form the ATP-cone domain.

It belongs to the NrdR family. It depends on Zn(2+) as a cofactor.

Negatively regulates transcription of bacterial ribonucleotide reductase nrd genes and operons by binding to NrdR-boxes. This Leptothrix cholodnii (strain ATCC 51168 / LMG 8142 / SP-6) (Leptothrix discophora (strain SP-6)) protein is Transcriptional repressor NrdR.